The chain runs to 194 residues: Probable molybdenum cofactor guanylyltransferase (194 aa).

Residues 8–10, K20, and D99 contribute to the GTP site; that span reads LAG. Mg(2+) is bound at residue D99.

It belongs to the MobA family. It depends on Mg(2+) as a cofactor.

It localises to the cytoplasm. The enzyme catalyses Mo-molybdopterin + GTP + H(+) = Mo-molybdopterin guanine dinucleotide + diphosphate. Its function is as follows. Transfers a GMP moiety from GTP to Mo-molybdopterin (Mo-MPT) cofactor (Moco or molybdenum cofactor) to form Mo-molybdopterin guanine dinucleotide (Mo-MGD) cofactor. In Synechococcus elongatus (strain ATCC 33912 / PCC 7942 / FACHB-805) (Anacystis nidulans R2), this protein is Probable molybdenum cofactor guanylyltransferase.